The chain runs to 356 residues: Dual-specificity RNA methyltransferase RlmN (356 aa).

Glu-92 (proton acceptor) is an active-site residue. In terms of domain architecture, Radical SAM core spans 98 to 327 (EKNRGTLCIS…HQGIRTMTRR (230 aa)). A disulfide bridge links Cys-105 with Cys-337. [4Fe-4S] cluster-binding residues include Cys-112, Cys-116, and Cys-119. Residues 162-163 (GE), Ser-194, 216-218 (SLH), and Asn-294 contribute to the S-adenosyl-L-methionine site. Cys-337 serves as the catalytic S-methylcysteine intermediate.

The protein belongs to the radical SAM superfamily. RlmN family. It depends on [4Fe-4S] cluster as a cofactor.

The protein resides in the cytoplasm. The catalysed reaction is adenosine(2503) in 23S rRNA + 2 reduced [2Fe-2S]-[ferredoxin] + 2 S-adenosyl-L-methionine = 2-methyladenosine(2503) in 23S rRNA + 5'-deoxyadenosine + L-methionine + 2 oxidized [2Fe-2S]-[ferredoxin] + S-adenosyl-L-homocysteine. The enzyme catalyses adenosine(37) in tRNA + 2 reduced [2Fe-2S]-[ferredoxin] + 2 S-adenosyl-L-methionine = 2-methyladenosine(37) in tRNA + 5'-deoxyadenosine + L-methionine + 2 oxidized [2Fe-2S]-[ferredoxin] + S-adenosyl-L-homocysteine. Functionally, specifically methylates position 2 of adenine 2503 in 23S rRNA and position 2 of adenine 37 in tRNAs. m2A2503 modification seems to play a crucial role in the proofreading step occurring at the peptidyl transferase center and thus would serve to optimize ribosomal fidelity. The sequence is that of Dual-specificity RNA methyltransferase RlmN from Ruthia magnifica subsp. Calyptogena magnifica.